Reading from the N-terminus, the 119-residue chain is Large ribosomal subunit protein bL20 (119 aa).

Belongs to the bacterial ribosomal protein bL20 family.

In terms of biological role, binds directly to 23S ribosomal RNA and is necessary for the in vitro assembly process of the 50S ribosomal subunit. It is not involved in the protein synthesizing functions of that subunit. The protein is Large ribosomal subunit protein bL20 of Chloroflexus aggregans (strain MD-66 / DSM 9485).